We begin with the raw amino-acid sequence, 151 residues long: D-aminoacyl-tRNA deacylase (151 aa).

A Gly-cisPro motif, important for rejection of L-amino acids motif is present at residues 137-138; it reads GP.

It belongs to the DTD family. As to quaternary structure, homodimer.

The protein resides in the cytoplasm. It carries out the reaction glycyl-tRNA(Ala) + H2O = tRNA(Ala) + glycine + H(+). The enzyme catalyses a D-aminoacyl-tRNA + H2O = a tRNA + a D-alpha-amino acid + H(+). An aminoacyl-tRNA editing enzyme that deacylates mischarged D-aminoacyl-tRNAs. Also deacylates mischarged glycyl-tRNA(Ala), protecting cells against glycine mischarging by AlaRS. Acts via tRNA-based rather than protein-based catalysis; rejects L-amino acids rather than detecting D-amino acids in the active site. By recycling D-aminoacyl-tRNA to D-amino acids and free tRNA molecules, this enzyme counteracts the toxicity associated with the formation of D-aminoacyl-tRNA entities in vivo and helps enforce protein L-homochirality. The polypeptide is D-aminoacyl-tRNA deacylase (Solibacter usitatus (strain Ellin6076)).